Reading from the N-terminus, the 283-residue chain is Nucleoid occlusion protein (283 aa).

A DNA-binding region (H-T-H motif) is located at residues 148-167 (EALAQRLGKGQSTIANKLRL).

Belongs to the ParB family.

It is found in the cytoplasm. It localises to the nucleoid. Effects nucleoid occlusion by binding relatively nonspecifically to DNA and preventing the assembly of the division machinery in the vicinity of the nucleoid, especially under conditions that disturb the cell cycle. It helps to coordinate cell division and chromosome segregation by preventing the formation of the Z ring through the nucleoid, which would cause chromosome breakage. In Bacillus licheniformis (strain ATCC 14580 / DSM 13 / JCM 2505 / CCUG 7422 / NBRC 12200 / NCIMB 9375 / NCTC 10341 / NRRL NRS-1264 / Gibson 46), this protein is Nucleoid occlusion protein.